A 321-amino-acid chain; its full sequence is UDP-3-O-acylglucosamine N-acyltransferase (321 aa).

The Proton acceptor role is filled by His231.

It belongs to the transferase hexapeptide repeat family. LpxD subfamily. In terms of assembly, homotrimer.

The catalysed reaction is a UDP-3-O-[(3R)-3-hydroxyacyl]-alpha-D-glucosamine + a (3R)-hydroxyacyl-[ACP] = a UDP-2-N,3-O-bis[(3R)-3-hydroxyacyl]-alpha-D-glucosamine + holo-[ACP] + H(+). Its pathway is bacterial outer membrane biogenesis; LPS lipid A biosynthesis. In terms of biological role, catalyzes the N-acylation of UDP-3-O-acylglucosamine using 3-hydroxyacyl-ACP as the acyl donor. Is involved in the biosynthesis of lipid A, a phosphorylated glycolipid that anchors the lipopolysaccharide to the outer membrane of the cell. The polypeptide is UDP-3-O-acylglucosamine N-acyltransferase (Campylobacter jejuni subsp. jejuni serotype O:2 (strain ATCC 700819 / NCTC 11168)).